The primary structure comprises 378 residues: tRNA-specific 2-thiouridylase MnmA (378 aa).

ATP contacts are provided by residues 7–14 (GLSGGVDS) and methionine 33. The interval 102–104 (NPD) is interaction with target base in tRNA. Cysteine 107 functions as the Nucleophile in the catalytic mechanism. Cysteine 107 and cysteine 209 are joined by a disulfide. Glycine 132 is a binding site for ATP. An interaction with tRNA region spans residues 159–161 (KDQ). The Cysteine persulfide intermediate role is filled by cysteine 209. The tract at residues 316 to 317 (RY) is interaction with tRNA.

The protein belongs to the MnmA/TRMU family.

The protein resides in the cytoplasm. It carries out the reaction S-sulfanyl-L-cysteinyl-[protein] + uridine(34) in tRNA + AH2 + ATP = 2-thiouridine(34) in tRNA + L-cysteinyl-[protein] + A + AMP + diphosphate + H(+). Catalyzes the 2-thiolation of uridine at the wobble position (U34) of tRNA, leading to the formation of s(2)U34. In Onion yellows phytoplasma (strain OY-M), this protein is tRNA-specific 2-thiouridylase MnmA.